Consider the following 330-residue polypeptide: Succinylglutamate desuccinylase (330 aa).

Positions 53, 56, and 147 each coordinate Zn(2+). E210 is an active-site residue.

The protein belongs to the AspA/AstE family. Succinylglutamate desuccinylase subfamily. Zn(2+) is required as a cofactor.

It carries out the reaction N-succinyl-L-glutamate + H2O = L-glutamate + succinate. The protein operates within amino-acid degradation; L-arginine degradation via AST pathway; L-glutamate and succinate from L-arginine: step 5/5. In terms of biological role, transforms N(2)-succinylglutamate into succinate and glutamate. In Yersinia pseudotuberculosis serotype O:3 (strain YPIII), this protein is Succinylglutamate desuccinylase.